The chain runs to 183 residues: Translation initiation factor IF-3 (183 aa).

The protein belongs to the IF-3 family. Monomer.

The protein localises to the cytoplasm. Its function is as follows. IF-3 binds to the 30S ribosomal subunit and shifts the equilibrium between 70S ribosomes and their 50S and 30S subunits in favor of the free subunits, thus enhancing the availability of 30S subunits on which protein synthesis initiation begins. The sequence is that of Translation initiation factor IF-3 from Yersinia enterocolitica serotype O:8 / biotype 1B (strain NCTC 13174 / 8081).